Reading from the N-terminus, the 572-residue chain is Proline--tRNA ligase (572 aa).

It belongs to the class-II aminoacyl-tRNA synthetase family. ProS type 1 subfamily. As to quaternary structure, homodimer.

The protein localises to the cytoplasm. It catalyses the reaction tRNA(Pro) + L-proline + ATP = L-prolyl-tRNA(Pro) + AMP + diphosphate. In terms of biological role, catalyzes the attachment of proline to tRNA(Pro) in a two-step reaction: proline is first activated by ATP to form Pro-AMP and then transferred to the acceptor end of tRNA(Pro). As ProRS can inadvertently accommodate and process non-cognate amino acids such as alanine and cysteine, to avoid such errors it has two additional distinct editing activities against alanine. One activity is designated as 'pretransfer' editing and involves the tRNA(Pro)-independent hydrolysis of activated Ala-AMP. The other activity is designated 'posttransfer' editing and involves deacylation of mischarged Ala-tRNA(Pro). The misacylated Cys-tRNA(Pro) is not edited by ProRS. The protein is Proline--tRNA ligase of Haemophilus influenzae (strain PittGG).